A 270-amino-acid polypeptide reads, in one-letter code: Urease accessory protein UreD (270 aa).

Belongs to the UreD family. UreD, UreF and UreG form a complex that acts as a GTP-hydrolysis-dependent molecular chaperone, activating the urease apoprotein by helping to assemble the nickel containing metallocenter of UreC. The UreE protein probably delivers the nickel.

It localises to the cytoplasm. Its function is as follows. Required for maturation of urease via the functional incorporation of the urease nickel metallocenter. This Microcystis aeruginosa (strain NIES-843 / IAM M-2473) protein is Urease accessory protein UreD.